A 2214-amino-acid polypeptide reads, in one-letter code: Genome polyprotein (2214 aa).

Disordered regions lie at residues 1 to 21 (MGAQ…VATG) and 600 to 619 (KPQK…VNSQ). Residue glycine 2 is the site of N-myristoyl glycine; by host attachment. The Cytoplasmic portion of the chain corresponds to 2–1525 (GAQVSSQKVG…NLNRAMTILQ (1524 aa)). Amphipathic alpha-helix regions lie at residues 580–601 (QGIE…QPKP) and 581–601 (GIEE…QPKP). The span at 606 to 619 (TAQSTPSTSGVNSQ) shows a compositional bias: polar residues. Active-site for protease 2A activity residues include histidine 906 and aspartate 924. Positions 941 and 943 each coordinate Zn(2+). The active-site For protease 2A activity is cysteine 995. Positions 1001 and 1003 each coordinate Zn(2+). Residues 1133-1205 (GDSWLKKFTE…HQSCPSQEQQ (73 aa)) form a membrane-binding region. The interval 1133-1271 (GDSWLKKFTE…SPGTGKSIAT (139 aa)) is oligomerization. The interval 1154–1158 (SNKIS) is RNA-binding. The region spanning 1237–1393 (ENTINNYIQF…SEHSIKGKLN (157 aa)) is the SF3 helicase domain. 1261–1268 (GSPGTGKS) is an ATP binding site. Positions 1401, 1404, 1413, and 1418 each coordinate Zn(2+). A C4-type zinc finger spans residues 1401–1418 (CKDCPQPANFKKCCPLVC). The tract at residues 1445–1452 (ERNRRANI) is RNA-binding. Positions 1456–1461 (MEALFQ) are oligomerization. The stretch at 1526–1541 (AVTTFAAVAAVVYVMY) is an intramembrane region. Residues 1542–2214 (KLFAGHQGAY…TLYRRWLDSF (673 aa)) lie on the Cytoplasmic side of the membrane. Tyrosine 1551 carries the O-(5'-phospho-RNA)-tyrosine modification. Residues 1571 to 1749 (GPGFDYAVAM…FAAALKRSYF (179 aa)) form the Peptidase C3 domain. Catalysis depends on for protease 3C activity residues histidine 1610, glutamate 1641, and cysteine 1717. A RdRp catalytic domain is found at 1980-2095 (EKLFAFDYTG…SYPHEVDASL (116 aa)). Positions 1986 and 2081 each coordinate Mg(2+).

Belongs to the picornaviruses polyprotein family. Interacts with capsid protein VP1 and capsid protein VP3 to form heterotrimeric protomers. In terms of assembly, interacts with capsid protein VP0, and capsid protein VP3 to form heterotrimeric protomers. Five protomers subsequently associate to form pentamers which serve as building blocks for the capsid. Interacts with capsid protein VP2, capsid protein VP3 and capsid protein VP4 following cleavage of capsid protein VP0. As to quaternary structure, interacts with capsid protein VP1 and capsid protein VP3 in the mature capsid. Interacts with capsid protein VP0 and capsid protein VP1 to form heterotrimeric protomers. Five protomers subsequently associate to form pentamers which serve as building blocks for the capsid. Interacts with capsid protein VP4 in the mature capsid. Interacts with protein 2C; this interaction may be important for virion morphogenesis. In terms of assembly, interacts with capsid protein VP1 and capsid protein VP3. As to quaternary structure, homodimer. Homohexamer; forms a hexameric ring structure with 6-fold symmetry characteristic of AAA+ ATPases. Interacts (via N-terminus) with host RTN3 (via reticulon domain); this interaction is important for viral replication. Interacts with capsid protein VP3; this interaction may be important for virion morphogenesis. In terms of assembly, interacts with protein 3CD. As to quaternary structure, homodimer. Interacts with host GBF1. Interacts (via GOLD domain) with host ACBD3 (via GOLD domain); this interaction allows the formation of a viral protein 3A/ACBD3 heterotetramer with a 2:2 stoichiometry, which will stimulate the recruitment of host PI4KB in order to synthesize PI4P at the viral RNA replication sites. Interacts with RNA-directed RNA polymerase. In terms of assembly, interacts with protein 3AB and with RNA-directed RNA polymerase. As to quaternary structure, interacts with Viral protein genome-linked and with protein 3CD. It depends on Mg(2+) as a cofactor. Post-translationally, specific enzymatic cleavages in vivo by the viral proteases yield processing intermediates and the mature proteins. In terms of processing, myristoylation is required for the formation of pentamers during virus assembly. Further assembly of 12 pentamers and a molecule of genomic RNA generates the provirion. During virion maturation, immature virions are rendered infectious following cleavage of VP0 into VP4 and VP2. This maturation seems to be an autocatalytic event triggered by the presence of RNA in the capsid and it is followed by a conformational change infectious virion. Post-translationally, myristoylation is required during RNA encapsidation and formation of the mature virus particle. In terms of processing, VPg is uridylylated by the polymerase into VPg-pUpU. This acts as a nucleotide-peptide primer for the genomic RNA replication.

It is found in the virion. The protein resides in the host cytoplasm. Its subcellular location is the host cytoplasmic vesicle membrane. The protein localises to the host nucleus. The catalysed reaction is a ribonucleoside 5'-triphosphate + H2O = a ribonucleoside 5'-diphosphate + phosphate + H(+). The enzyme catalyses Selective cleavage of Tyr-|-Gly bond in the picornavirus polyprotein.. It catalyses the reaction RNA(n) + a ribonucleoside 5'-triphosphate = RNA(n+1) + diphosphate. It carries out the reaction Selective cleavage of Gln-|-Gly bond in the poliovirus polyprotein. In other picornavirus reactions Glu may be substituted for Gln, and Ser or Thr for Gly.. With respect to regulation, replication or transcription is subject to high level of random mutations by the nucleotide analog ribavirin. Functionally, forms an icosahedral capsid of pseudo T=3 symmetry with capsid proteins VP2 and VP3. The capsid is 300 Angstroms in diameter, composed of 60 copies of each capsid protein and enclosing the viral positive strand RNA genome. Capsid protein VP1 mainly forms the vertices of the capsid. Capsid protein VP1 interacts with host cell receptor to provide virion attachment to target host cells. This attachment induces virion internalization. Tyrosine kinases are probably involved in the entry process. After binding to its receptor, the capsid undergoes conformational changes. Capsid protein VP1 N-terminus (that contains an amphipathic alpha-helix) and capsid protein VP4 are externalized. Together, they shape a pore in the host membrane through which viral genome is translocated to host cell cytoplasm. In terms of biological role, forms an icosahedral capsid of pseudo T=3 symmetry with capsid proteins VP2 and VP3. The capsid is 300 Angstroms in diameter, composed of 60 copies of each capsid protein and enclosing the viral positive strand RNA genome. Its function is as follows. Lies on the inner surface of the capsid shell. After binding to the host receptor, the capsid undergoes conformational changes. Capsid protein VP4 is released, Capsid protein VP1 N-terminus is externalized, and together, they shape a pore in the host membrane through which the viral genome is translocated into the host cell cytoplasm. Component of immature procapsids, which is cleaved into capsid proteins VP4 and VP2 after maturation. Allows the capsid to remain inactive before the maturation step. Functionally, cysteine protease that cleaves viral polyprotein and specific host proteins. It is responsible for the autocatalytic cleavage between the P1 and P2 regions, which is the first cleavage occurring in the polyprotein. Also cleaves the host translation initiation factor EIF4G1, in order to shut down the capped cellular mRNA translation. Inhibits the host nucleus-cytoplasm protein and RNA trafficking by cleaving host members of the nuclear pores. Counteracts stress granule formation probably by antagonizing its assembly or promoting its dissassembly. Cleaves and inhibits host IFIH1/MDA5, thereby inhibiting the type-I IFN production and the establishment of the antiviral state. Cleaves and inhibits host MAVS, thereby inhibiting the type-I IFN production and the establishment of the antiviral state. In terms of biological role, plays an essential role in the virus replication cycle by acting as a viroporin. Creates a pore in the host endoplasmic reticulum and as a consequence releases Ca2+ in the cytoplasm of infected cell. In turn, high levels of cytoplasmic calcium may trigger membrane trafficking and transport of viral ER-associated proteins to viroplasms, sites of viral genome replication. Its function is as follows. Induces and associates with structural rearrangements of intracellular membranes. Displays RNA-binding, nucleotide binding and NTPase activities. May play a role in virion morphogenesis and viral RNA encapsidation by interacting with the capsid protein VP3. Localizes the viral replication complex to the surface of membranous vesicles. Together with protein 3CD binds the Cis-Active RNA Element (CRE) which is involved in RNA synthesis initiation. Acts as a cofactor to stimulate the activity of 3D polymerase, maybe through a nucleid acid chaperone activity. Functionally, localizes the viral replication complex to the surface of membranous vesicles. It inhibits host cell endoplasmic reticulum-to-Golgi apparatus transport and causes the disassembly of the Golgi complex, possibly through GBF1 interaction. This would result in depletion of MHC, trail receptors and IFN receptors at the host cell surface. Plays an essential role in viral RNA replication by recruiting ACBD3 and PI4KB at the viral replication sites, thereby allowing the formation of the rearranged membranous structures where viral replication takes place. In terms of biological role, acts as a primer for viral RNA replication and remains covalently bound to viral genomic RNA. VPg is uridylylated prior to priming replication into VPg-pUpU. The oriI viral genomic sequence may act as a template for this. The VPg-pUpU is then used as primer on the genomic RNA poly(A) by the RNA-dependent RNA polymerase to replicate the viral genome. During genome replication, the VPg-RNA linkage is removed by the host TDP2, thereby accelerating replication. During the late stage of the replication cycle, host TDP2 is excluded from sites of viral RNA synthesis and encapsidation, allowing for the generation of progeny virions. Its function is as follows. Involved in the viral replication complex and viral polypeptide maturation. It exhibits protease activity with a specificity and catalytic efficiency that is different from protease 3C. Protein 3CD lacks polymerase activity. Protein 3CD binds to the 5'UTR of the viral genome. Replicates the viral genomic RNA on the surface of intracellular membranes. May form linear arrays of subunits that propagate along a strong head-to-tail interaction called interface-I. Covalently attaches UMP to a tyrosine of VPg, which is used to prime RNA synthesis. The positive stranded RNA genome is first replicated at virus induced membranous vesicles, creating a dsRNA genomic replication form. This dsRNA is then used as template to synthesize positive stranded RNA genomes. ss(+)RNA genomes are either translated, replicated or encapsidated. Functionally, major viral protease that mediates proteolytic processing of the polyprotein. Cleaves host EIF5B, contributing to host translation shutoff. Also cleaves host PABPC1, contributing to host translation shutoff. Cleaves host NLRP1, triggers host N-glycine-mediated degradation of the autoinhibitory NLRP1 N-terminal fragment. The sequence is that of Genome polyprotein from Coxsackievirus A24 (strain EH24/70).